A 132-amino-acid polypeptide reads, in one-letter code: Interleukin-5 (132 aa).

Positions 1-19 are cleaved as a signal peptide; the sequence is MHLRLTLVALGAAYVCANA. N-linked (GlcNAc...) asparagine glycosylation is found at Asn74 and Asn88.

This sequence belongs to the IL-5 family. As to quaternary structure, homodimer; disulfide-linked. Interacts with IL5RA. Interacts with CSF2RB.

The protein resides in the secreted. In terms of biological role, homodimeric cytokine expressed predominantly by T-lymphocytes and NK cells that plays an important role in the survival, differentiation, and chemotaxis of eosinophils. Also acts on activated and resting B-cells to induce immunoglobulin production, growth, and differentiation. Mechanistically, exerts its biological effects through a receptor composed of IL5RA subunit and the cytokine receptor common subunit beta/CSF2RB. Binding to the receptor leads to activation of various kinases including LYN, SYK and JAK2 and thereby propagates signals through the RAS-MAPK and JAK-STAT5 pathways respectively. The protein is Interleukin-5 (IL5) of Ovis aries (Sheep).